A 294-amino-acid chain; its full sequence is uncharacterized protein (294 aa).

The next 3 helical transmembrane spans lie at 21-41, 51-71, and 77-97; these read AIVATNFSWLFITFFVMTFTF, PIIWTLYFFLCLIAFLLLWAA, and ILFSFAFGDVYSFFMAGVFLF. The interval 156-176 is disordered; it reads HPVPFPAEPGSPDPVSPPPPI. A coiled-coil region spans residues 184–215; the sequence is ERAESLHAGNIELAEDLQRIQEMERNLENERS. A compositionally biased stretch (basic and acidic residues) spans 265–277; sequence QQENESRLEERRF. Positions 265 to 294 are disordered; sequence QQENESRLEERRFQSHSTNSLFEADSSRDN.

The protein resides in the mitochondrion membrane. This is an uncharacterized protein from Arabidopsis thaliana (Mouse-ear cress).